A 373-amino-acid chain; its full sequence is Envelope glycoprotein C homolog (373 aa).

An N-terminal signal peptide occupies residues 1–25; sequence MVSNMRSTRTALTGWVGIFLVLSLQ. The tract at residues 58 to 93 is disordered; the sequence is EVPNSPTTELSTTVATKTAVPTTESTSSSEAHRNSS. The segment covering 59–68 has biased composition (polar residues); it reads VPNSPTTELS. The segment covering 69-80 has biased composition (low complexity); the sequence is TTVATKTAVPTT. 4 N-linked (GlcNAc...) asparagine; by host glycosylation sites follow: asparagine 91, asparagine 111, asparagine 203, and asparagine 345. An Ig-like domain is found at 249-347; sequence PASVDVLAPP…GDMISTSNAT (99 aa).

The protein belongs to the herpesviridae glycoprotein C family.

The sequence is that of Envelope glycoprotein C homolog (gC) from Gallus gallus (Chicken).